The chain runs to 902 residues: Nuclear factor of activated T-cells, cytoplasmic 4 (902 aa).

2 disordered regions span residues 16-180 (VFGE…SSWS) and 208-369 (RFGL…GGSR). Residues 50–81 (EPPPYGAAPIGIPRPPPPRPGMHSPPPRPAPS) are compositionally biased toward pro residues. A compositionally biased stretch (gly residues) spans 96 to 109 (GGPGGGAGGAGGGR). The calcineurin-binding stretch occupies residues 114 to 119 (PSIRIT). Gly residues predominate over residues 151 to 165 (GFGGYREAGGQGGGA). Positions 166–180 (FFSPSPGSSSLSSWS) are enriched in low complexity. Residues serine 168 and serine 170 each carry the phosphoserine; by MAPK7 and MAPK14 modification. A phosphoserine; by MAPK8 and MAPK9 mark is found at serine 213 and serine 217. Residues 213–229 (SPLPSPRASPRPWTPED) form an SP 1 repeat. The tract at residues 213–293 (SPLPSPRASP…LSRRGSLGEE (81 aa)) is 2 approximate SP repeats. Composition is skewed to pro residues over residues 215–227 (LPSP…PWTP) and 254–263 (GPTPASPRPA). The Nuclear localization signal motif lies at 268–270 (KRR). Over residues 272 to 288 (SSSGTPSSASPALSRRG) the composition is skewed to low complexity. One copy of the SP 2; approximate repeat lies at 277–293 (PSSASPALSRRGSLGEE). 2 positions are modified to phosphoserine; by RPS6KA3: serine 289 and serine 344. The RHD domain occupies 401–582 (SALPPLDWPL…VPIECSQRSA (182 aa)). The DNA-binding element occupies 430-437 (RAHYETEG). Positions 586–683 (PQVEAYSPSA…KRSPTQSFRF (98 aa)) constitute an IPT/TIG domain. The Nuclear localization signal signature appears at 672–674 (RRK). Lysine 689 participates in a covalent cross-link: Glycyl lysine isopeptide (Lys-Gly) (interchain with G-Cter in SUMO2). Residues 791 to 870 (PYGGRGSSFS…GGYSSGFRDS (80 aa)) are disordered. A compositionally biased stretch (pro residues) spans 805 to 824 (FSPPAPFRPPPLPASPPLEG).

As to quaternary structure, member of the multicomponent NFATC transcription complex that consists of at least two components, a pre-existing cytoplasmic component NFATC2 and an inducible nuclear component NFATC1. Other NFAT proteins, such as NFATC3, or members of the activating protein-1 (AP-1) family and MAF can also bind the complex. NFAT proteins can bind DNA as monomers or dimers. Component of a promoter-binding complex composed of STAT3, NFATC3 and NFATC4; complex formation is enhanced by calcineurin. Interacts with CREBBP; this interaction potentiates transcription activation. Interacts with MAPK8/JNK1 and MAPK9/JNK2. Interacts with GATA4 (via the second Zn finger). Interacts (via N-terminus) with IRAK1 (via C-terminus). Interacts with RPS6KA3. Interacts with HOMER1, HOMER2 and HOMER3; this interaction competes with calcineurin/PPP3CA-binding and hence prevents NFATC4 dephosphorylation and activation. Interacts with ESR1 and ESR2; this interaction decreases NFATC4 transcriptional activity. Interacts with MTOR and MAPK7/ERK5. Interacts with TRIM17; this interaction prevents NFATC3 nuclear localization. Interacts with TCF25 (via C-terminus); the interaction leads to suppression of NFATC4 transcription factor activity and is reduced following stimulation with angiotensin-2. Post-translationally, phosphorylated by NFATC-kinases; dephosphorylated by calcineurin/PPP3CA. Phosphorylated on Ser-168 and Ser-170 by MTOR, IRAK1, MAPK7/ERK5 and MAPK14/p38, on Ser-213 and Ser-217 by MAPK8/JNK1 and MAPK9/JNK2, and on Ser-289 and Ser-344 by RPS6KA3. Phosphorylated by GSK3B. Phosphorylation by GSK3B markedly increases NFATC4 ubiquitination. Phosphorylation at Ser-168 and Ser-170 is stimulated by UV irradiation. Phosphorylation determines subcellular location: the hyperphosphorylated protein is cytosolic, while the dephosphorylated form is targeted to the nucleus. Ubiquitinated, leading to degradation by the proteasome. Ubiquitination may be stimulated by GSK3B-dependent phosphorylation. Polyubiquitin linkage mainly occurs through 'Lys-48'. Widely expressed, with high levels in placenta, lung, kidney, testis and ovary. Weakly expressed in spleen and thymus. In the hippocampus, expressed in the granular layer of the dentate gyrus, in the pyramidal neurons of CA3 region, and in the hippocampal fissure. Expressed in the heart (at protein level).

It localises to the cytoplasm. It is found in the nucleus. Transcriptional activity may be repressed by ESR1 and ESR2. Its function is as follows. Ca(2+)-regulated transcription factor that is involved in several processes, including the development and function of the immune, cardiovascular, musculoskeletal, and nervous systems. Involved in T-cell activation, stimulating the transcription of cytokine genes, including that of IL2 and IL4. Along with NFATC3, involved in embryonic heart development. Following JAK/STAT signaling activation and as part of a complex with NFATC3 and STAT3, binds to the alpha-beta E4 promoter region of CRYAB and activates transcription in cardiomyocytes. Involved in mitochondrial energy metabolism required for cardiac morphogenesis and function. Transactivates many genes involved in the cardiovascular system, including AGTR2, NPPB/BNP (in synergy with GATA4), NPPA/ANP/ANF and MYH7/beta-MHC. Involved in the regulation of adult hippocampal neurogenesis. Involved in BDNF-driven pro-survival signaling in hippocampal adult-born neurons. Involved in the formation of long-term spatial memory and long-term potentiation. In cochlear nucleus neurons, may play a role in deafferentation-induced apoptosis during the developmental critical period, when auditory neurons depend on afferent input for survival. Binds to and activates the BACE1/Beta-secretase 1 promoter, hence may regulate the proteolytic processing of the amyloid precursor protein (APP). Plays a role in adipocyte differentiation. May be involved in myoblast differentiation into myotubes. Binds the consensus DNA sequence 5'-GGAAAAT-3'. In the presence of CREBBP, activates TNF transcription. Binds to PPARG gene promoter and regulates its activity. Binds to PPARG and REG3G gene promoters. The sequence is that of Nuclear factor of activated T-cells, cytoplasmic 4 (NFATC4) from Homo sapiens (Human).